The primary structure comprises 352 residues: MGDSSGSRPTWPRRSAACSRNKVGKDCMPDDYSYINTRVRVMRTKLLDGRALDAALASGSYQEFLRVLSETDFAPNMRETTAEGAGLPELDRALSQNLFDTTQRVLGFADGDAKREIETLLMKWDLTNLKTLARGIVSGRGAETIQQNLIPGGTIKPSVLQTASQSTDLASAATALGVGGHPLAKVFRNAVTAYNTTGRLLDLEVLLDQGYYRYATQVSRDTSLRRYLSREIDITNALIARNSRGGTLDTNLFVPGGSLDAAGYGRLGAGDAGGNADITAILEAPSIEDAEVAARTALDRAARSSAVSDVEGVGIILDFLRRKEIEVAKLRLIGRGKYYDLPTDEIRREVQA.

Belongs to the V-ATPase V0D/AC39 subunit family.

In terms of biological role, produces ATP from ADP in the presence of a proton gradient across the membrane. The chain is V-type ATP synthase subunit C (atpC) from Deinococcus radiodurans (strain ATCC 13939 / DSM 20539 / JCM 16871 / CCUG 27074 / LMG 4051 / NBRC 15346 / NCIMB 9279 / VKM B-1422 / R1).